The primary structure comprises 344 residues: Beta-1,4-galactosyltransferase 4 (344 aa).

The Cytoplasmic portion of the chain corresponds to 1 to 12 (MGCNPPYLLSYR). Residues 13–38 (LRLLLLFTLCLTVLGWATSNYFVGAI) traverse the membrane as a helical; Signal-anchor for type II membrane protein segment. Residues 39 to 344 (QVIPRAKNFM…NITVDFWTAA (306 aa)) are Lumenal-facing. Cys77 and Cys118 are disulfide-bonded. Residues 129 to 133 (PHRNR), 168 to 170 (FNR), and 195 to 196 (VD) contribute to the UDP-alpha-D-galactose site. A disulfide bridge links Cys189 with Cys208. Asp196 contacts Mn(2+). Asn220 is a glycosylation site (N-linked (GlcNAc...) asparagine). UDP-alpha-D-galactose contacts are provided by Tyr224 and Trp256. 258–261 (GEDD) lines the N-acetyl-D-glucosamine pocket. His289 is a binding site for Mn(2+). 289 to 291 (HTR) is a binding site for UDP-alpha-D-galactose. Arg301 lines the N-acetyl-D-glucosamine pocket. N-linked (GlcNAc...) asparagine glycosylation occurs at Asn335.

This sequence belongs to the glycosyltransferase 7 family. In terms of assembly, interacts with SLC35A2/UGT1. It depends on Mn(2+) as a cofactor.

The protein resides in the golgi apparatus membrane. Its subcellular location is the secreted. It catalyses the reaction N-acetyl-D-glucosamine + UDP-alpha-D-galactose = beta-D-galactosyl-(1-&gt;4)-N-acetyl-D-glucosamine + UDP + H(+). The enzyme catalyses a beta-D-GlcNAc-(1-&gt;3)-beta-D-Gal-(1-&gt;4)-beta-D-Glc-(1&lt;-&gt;1)-Cer(d18:1(4E)) + UDP-alpha-D-galactose = a neolactoside nLc4Cer(d18:1(4E)) + UDP + H(+). It carries out the reaction 3-O-{beta-D-galactosyl-(1-&gt;3)-[6-O-sulfo-N-acetyl-beta-D-glucosaminyl-(1-&gt;6)]-N-acetyl-alpha-D-galactosaminyl}-L-seryl-[protein] + UDP-alpha-D-galactose = 3-O-{beta-D-galactosyl-(1-&gt;3)-[beta-D-galactosyl-(1-&gt;4)-6-O-sulfo-N-acetyl-beta-D-glucosaminyl-(1-&gt;6)]-N-acetyl-alpha-D-galactosaminyl}-L-seryl-[protein] + UDP + H(+). The catalysed reaction is 3-O-{beta-D-galactosyl-(1-&gt;3)-[6-O-sulfo-N-acetyl-beta-D-glucosaminyl-(1-&gt;6)]-N-acetyl-alpha-D-galactosaminyl}-L-threonyl-[protein] + UDP-alpha-D-galactose = 3-O-{beta-D-galactosyl-(1-&gt;3)-[beta-D-galactosyl-(1-&gt;4)-6-O-sulfo-N-acetyl-beta-D-glucosaminyl-(1-&gt;6)]-N-acetyl-alpha-D-galactosaminyl}-L-threonyl-[protein] + UDP + H(+). Its pathway is protein modification; protein glycosylation. It functions in the pathway glycolipid biosynthesis. In terms of biological role, galactose (Gal) transferase involved in the synthesis of terminal N-acetyllactosamine (LacNac) unit present on glycan chains of glycoproteins and glycosphingolipids. Catalyzes the transfer of Gal residue via a beta1-&gt;4 linkage from UDP-Gal to the non-reducing terminal N-acetyl glucosamine 6-O-sulfate (6-O-sulfoGlcNAc) in the linearly growing chain of both N- and O-linked keratan sulfate proteoglycans. Cooperates with B3GNT7 N-acetyl glucosamine transferase and CHST6 and CHST1 sulfotransferases to construct and elongate mono- and disulfated disaccharide units [-&gt;3Galbeta1-&gt;4(6-sulfoGlcNAcbeta)1-&gt;] and [-&gt;3(6-sulfoGalbeta)1-&gt;4(6-sulfoGlcNAcbeta)1-&gt;] within keratan sulfate polymer. Transfers Gal residue via a beta1-&gt;4 linkage to terminal 6-O-sulfoGlcNAc within the LacNac unit of core 2 O-glycans forming 6-sulfo-sialyl-Lewis X (sLex). May contribute to the generation of sLex epitope on mucin-type glycoproteins that serve as ligands for SELL/L-selectin, a major regulator of leukocyte migration. In the biosynthesis pathway of neolacto-series glycosphingolipids, transfers Gal residue via a beta1-&gt;4 linkage to terminal GlcNAc of a lactotriaosylceramide (Lc3Cer) acceptor to form a neolactotetraosylceramide. This Rattus norvegicus (Rat) protein is Beta-1,4-galactosyltransferase 4 (B4galt4).